Reading from the N-terminus, the 517-residue chain is Ubiquitin carboxyl-terminal hydrolase 30 (517 aa).

Over 1-35 the chain is Mitochondrial intermembrane; sequence MLSSRAQAARTAADKALQRFLRTGAAVRYKVMKNW. The chain crosses the membrane as a helical span at residues 36-56; sequence GVIGGIAAALAAGIYVIWGPI. Topologically, residues 57 to 517 are cytoplasmic; sequence TERKKRRKGL…QQGREYRSEE (461 aa). In terms of domain architecture, USP spans 68–502; sequence PGLVNLGNTC…SAYLLFYERV (435 aa). Residue cysteine 77 is the Nucleophile of the active site. Residues lysine 235 and lysine 289 each participate in a glycyl lysine isopeptide (Lys-Gly) (interchain with G-Cter in ubiquitin) cross-link. Residues 364–395 form a disordered region; the sequence is SQHGPKATESPGSALGVQDTQAAPKPGLSQPA. Histidine 452 (proton acceptor) is an active-site residue.

This sequence belongs to the peptidase C19 family. Ubiquitinated by parkin (PRKN) at Lys-235 and Lys-289, leading to its degradation.

The protein localises to the mitochondrion outer membrane. The catalysed reaction is Thiol-dependent hydrolysis of ester, thioester, amide, peptide and isopeptide bonds formed by the C-terminal Gly of ubiquitin (a 76-residue protein attached to proteins as an intracellular targeting signal).. Its activity is regulated as follows. Inhibited by the diterpenoid derivative 15-oxospiramilactone (S3). Deubiquitinating enzyme tethered to the mitochondrial outer membrane that acts as a key inhibitor of mitophagy by counteracting the action of parkin (PRKN): hydrolyzes ubiquitin attached by parkin on target proteins, such as RHOT1/MIRO1 and TOMM20, thereby blocking parkin's ability to drive mitophagy. Preferentially cleaves 'Lys-6'- and 'Lys-11'-linked polyubiquitin chains, 2 types of linkage that participate in mitophagic signaling. Does not cleave efficiently polyubiquitin phosphorylated at 'Ser-65'. Acts as a negative regulator of mitochondrial fusion by mediating deubiquitination of MFN1 and MFN2. In Rattus norvegicus (Rat), this protein is Ubiquitin carboxyl-terminal hydrolase 30 (Usp30).